Consider the following 146-residue polypeptide: Type 1 phosphatases regulator YPI1 (146 aa).

The tract at residues 23-146 (RAANTNITEG…EYRKRMNANV (124 aa)) is disordered. Over residues 24 to 40 (AANTNITEGESTSQSRN) the composition is skewed to polar residues. Over residues 107–120 (RQRRIERRRRRQKT) the composition is skewed to basic residues.

Belongs to the YPI1 family.

It is found in the nucleus. Functionally, regulator of type 1 phosphatases which maintains protein phosphatase activity under strict control. The protein is Type 1 phosphatases regulator YPI1 (YPI1) of Candida glabrata (strain ATCC 2001 / BCRC 20586 / JCM 3761 / NBRC 0622 / NRRL Y-65 / CBS 138) (Yeast).